A 90-amino-acid polypeptide reads, in one-letter code: Small ribosomal subunit protein uS17 (90 aa).

This sequence belongs to the universal ribosomal protein uS17 family. In terms of assembly, part of the 30S ribosomal subunit.

In terms of biological role, one of the primary rRNA binding proteins, it binds specifically to the 5'-end of 16S ribosomal RNA. This chain is Small ribosomal subunit protein uS17, found in Burkholderia thailandensis (strain ATCC 700388 / DSM 13276 / CCUG 48851 / CIP 106301 / E264).